The primary structure comprises 75 residues: Putative defensin-like protein 119 (75 aa).

The first 25 residues, Met1–Gly25, serve as a signal peptide directing secretion. 4 cysteine pairs are disulfide-bonded: Cys29–Cys73, Cys39–Cys58, Cys44–Cys67, and Cys48–Cys69.

The protein belongs to the DEFL family.

It localises to the secreted. The polypeptide is Putative defensin-like protein 119 (LCR53) (Arabidopsis thaliana (Mouse-ear cress)).